Reading from the N-terminus, the 244-residue chain is Venom nerve growth factor (244 aa).

The first 18 residues, Met-1–Ala-18, serve as a signal peptide directing secretion. The propeptide occupies Ala-19–Arg-125. Disulfide bonds link Cys-139-Cys-204, Cys-182-Cys-232, and Cys-192-Cys-234. Residue Asn-148 is glycosylated (N-linked (GlcNAc...) asparagine).

This sequence belongs to the NGF-beta family. In terms of assembly, homodimer; non-covalently linked. In terms of processing, N-glycosylated. Expressed by the venom gland.

It is found in the secreted. Nerve growth factor is important for the development and maintenance of the sympathetic and sensory nervous systems. It stimulates division and differentiation of sympathetic and embryonic sensory neurons as well as basal forebrain cholinergic neurons in the brain. Its relevance in the snake venom is not clear. However, it has been shown to inhibit metalloproteinase-dependent proteolysis of platelet glycoprotein Ib alpha, suggesting a metalloproteinase inhibition to prevent metalloprotease autodigestion and/or protection against prey proteases. Binds a lipid between the two protein chains in the homodimer. The lipid-bound form promotes histamine relase from mouse mast cells, contrary to the lipid-free form. It promotes neurite outgrowth in rat PC12 pheochromocytoma cells. The polypeptide is Venom nerve growth factor (Macrovipera lebetinus (Levantine viper)).